A 139-amino-acid chain; its full sequence is mRNA stability protein mug134 (139 aa).

The segment at 83–139 is disordered; it reads IGKEIPSPDTIPHRVVSAGSPNKEPSLHTKRPSESSPSGASSRRESVTRHDLESNEN. Residues 124 to 139 are compositionally biased toward basic and acidic residues; the sequence is SRRESVTRHDLESNEN.

This sequence belongs to the endosulfine family.

It localises to the nucleus. It is found in the cytoplasm. In terms of biological role, plays an essential role in initiation of the G0 program by preventing the degradation of specific nutrient-regulated mRNAs via the 5'-3' mRNA decay pathway. The sequence is that of mRNA stability protein mug134 (mug134) from Schizosaccharomyces pombe (strain 972 / ATCC 24843) (Fission yeast).